The following is a 300-amino-acid chain: Ribosomal protein bS6--L-glutamate ligase (300 aa).

Positions 104-287 (MQLLARQGID…IAGKMIRWIE (184 aa)) constitute an ATP-grasp domain. ATP is bound by residues Lys141, 178–179 (EY), Asp187, and 211–213 (RSN). The Mg(2+) site is built by Asp248, Glu260, and Asn262. 3 residues coordinate Mn(2+): Asp248, Glu260, and Asn262.

It belongs to the RimK family. Mg(2+) serves as cofactor. Requires Mn(2+) as cofactor.

Functionally, an L-glutamate ligase that catalyzes the ATP-dependent post-translational addition of glutamate residues to the C-terminus of ribosomal protein bS6 (RpsF). Is also able to catalyze the synthesis of poly-alpha-glutamate in vitro, via ATP hydrolysis from unprotected glutamate as substrate. The number of glutamate residues added to either RpsF or to poly-alpha-glutamate changes with pH. The protein is Ribosomal protein bS6--L-glutamate ligase of Shigella dysenteriae serotype 1 (strain Sd197).